We begin with the raw amino-acid sequence, 344 residues long: MEARLKELKQKALELIEEAKELKGLNDVRVAYLGKKGPITEVLRGMGKLSAEERPRMGALVNEVREAIQTRLDDKISNLEKAVIEAKLATETIDVTLPGRPVETGCHHPLTAVVEQIEDVFIGMGYEVAEGTEVEKDYYNFEALNLPKDHPARDMQDTFYITEETLLRTHTSSVQARTMENNKEKGPIKIICPGKVYRRDDDDATHSHQFMQIEGLVIDKNIRMSDLKGTLQVFVKKMFGEDREIRLRPSFFPFTEPSVEMDISCMMCHGKGCGTCKGTGWIEILGAGMVHPNVLEMAGYDSKEYQGFAFGMGAERIAMLKYGVDDIRHFYTNDVRFLQQFKRA.

Glutamate 256 provides a ligand contact to Mg(2+).

Belongs to the class-II aminoacyl-tRNA synthetase family. Phe-tRNA synthetase alpha subunit type 1 subfamily. Tetramer of two alpha and two beta subunits. Mg(2+) is required as a cofactor.

It localises to the cytoplasm. It catalyses the reaction tRNA(Phe) + L-phenylalanine + ATP = L-phenylalanyl-tRNA(Phe) + AMP + diphosphate + H(+). The chain is Phenylalanine--tRNA ligase alpha subunit from Bacillus anthracis (strain CDC 684 / NRRL 3495).